Here is a 155-residue protein sequence, read N- to C-terminus: Protein SprT-like (155 aa).

In terms of domain architecture, SprT-like spans 6–148; it reads LQRLVERVSL…VCGQCGGKLM (143 aa). His-67 is a Zn(2+) binding site. Glu-68 is an active-site residue. His-71 is a binding site for Zn(2+).

This sequence belongs to the SprT family. It depends on Zn(2+) as a cofactor.

It is found in the cytoplasm. This Geobacillus sp. (strain WCH70) protein is Protein SprT-like.